The following is a 295-amino-acid chain: Xyloglucan endotransglucosylase/hydrolase (295 aa).

Positions 1-23 (MAVSSTPWALVALFLMASSTVMA) are cleaved as a signal peptide. Residues 25–222 (PPRKAIDVPF…WANAPFIASY (198 aa)) enclose the GH16 domain. Glu-108 acts as the Nucleophile in catalysis. The Proton donor role is filled by Glu-112. Residue Glu-112 participates in xyloglucan binding. A glycan (N-linked (GlcNAc...) asparagine) is linked at Asn-116. Xyloglucan contacts are provided by residues 125–127 (QTN), 135–137 (NRE), 201–202 (DW), and Gly-206. Disulfide bonds link Cys-230–Cys-239 and Cys-276–Cys-289. Arg-281 serves as a coordination point for xyloglucan.

This sequence belongs to the glycosyl hydrolase 16 family. XTH group 1 subfamily. Post-translationally, contains at least one intrachain disulfide bond essential for its enzymatic activity. The N-glycan consists of an (GlcNAc)2(Hex)6 oligosaccharide; not essential for its enzymatic activity.

It is found in the secreted. The protein resides in the cell wall. Its subcellular location is the extracellular space. It localises to the apoplast. It catalyses the reaction breaks a beta-(1-&gt;4) bond in the backbone of a xyloglucan and transfers the xyloglucanyl segment on to O-4 of the non-reducing terminal glucose residue of an acceptor, which can be a xyloglucan or an oligosaccharide of xyloglucan.. Its function is as follows. Catalyzes xyloglucan endohydrolysis (XEH) and/or endotransglycosylation (XET). Cleaves and religates xyloglucan polymers, an essential constituent of the primary cell wall, and thereby participates in cell wall construction of growing tissues. The polypeptide is Xyloglucan endotransglucosylase/hydrolase (XET16A) (Brassica oleracea var. botrytis (Cauliflower)).